The sequence spans 327 residues: Ribonucleoside-diphosphate reductase small chain (327 aa).

The Fe cation site is built by Asp70, Glu101, and His104. The active site involves Tyr108. Residues Glu164, Glu198, and His201 each coordinate Fe cation.

The protein belongs to the ribonucleoside diphosphate reductase small chain family. As to quaternary structure, heterotetramer composed of a homodimer of the large subunit (R1) and a homodimer of the small subunit (R2). Larger multisubunit protein complex are also active, composed of (R1)n(R2)n. Fe cation is required as a cofactor.

It catalyses the reaction a 2'-deoxyribonucleoside 5'-diphosphate + [thioredoxin]-disulfide + H2O = a ribonucleoside 5'-diphosphate + [thioredoxin]-dithiol. Its function is as follows. Ribonucleoside-diphosphate reductase holoenzyme provides the precursors necessary for viral DNA synthesis. Allows virus growth in non-dividing cells. Catalyzes the biosynthesis of deoxyribonucleotides from the corresponding ribonucleotides. The chain is Ribonucleoside-diphosphate reductase small chain from African swine fever virus (isolate Tick/Malawi/Lil 20-1/1983) (ASFV).